The chain runs to 359 residues: Heat-inducible transcription repressor HrcA (359 aa).

The protein belongs to the HrcA family.

In terms of biological role, negative regulator of class I heat shock genes (grpE-dnaK-dnaJ and groELS operons). Prevents heat-shock induction of these operons. In Roseiflexus sp. (strain RS-1), this protein is Heat-inducible transcription repressor HrcA.